Reading from the N-terminus, the 82-residue chain is uncharacterized protein (82 aa).

The protein belongs to the chlamydial CPn_0711/CT_665/TC_0036 family.

This is an uncharacterized protein from Chlamydia pneumoniae (Chlamydophila pneumoniae).